Consider the following 208-residue polypeptide: Negative modulator of initiation of replication (208 aa).

Residues 115–116 (AV) are interaction with DNA.

It belongs to the SeqA family. Homodimer. Polymerizes to form helical filaments.

Its subcellular location is the cytoplasm. Negative regulator of replication initiation, which contributes to regulation of DNA replication and ensures that replication initiation occurs exactly once per chromosome per cell cycle. Binds to pairs of hemimethylated GATC sequences in the oriC region, thus preventing assembly of replication proteins and re-initiation at newly replicated origins. Repression is relieved when the region becomes fully methylated. In Shewanella frigidimarina (strain NCIMB 400), this protein is Negative modulator of initiation of replication.